The primary structure comprises 397 residues: Enoyl-[acyl-carrier-protein] reductase [NADH] (397 aa).

NAD(+) is bound by residues 47–52 (GASTGY), 73–74 (LE), 110–111 (DA), and 138–139 (LA). Position 224 (Tyr224) interacts with substrate. The active-site Proton donor is the Tyr234. Residues Lys243 and 272-274 (LVT) contribute to the NAD(+) site.

This sequence belongs to the TER reductase family. Monomer.

The enzyme catalyses a 2,3-saturated acyl-[ACP] + NAD(+) = a (2E)-enoyl-[ACP] + NADH + H(+). The protein operates within lipid metabolism; fatty acid biosynthesis. Functionally, involved in the final reduction of the elongation cycle of fatty acid synthesis (FAS II). Catalyzes the reduction of a carbon-carbon double bond in an enoyl moiety that is covalently linked to an acyl carrier protein (ACP). This is Enoyl-[acyl-carrier-protein] reductase [NADH] from Methylobacillus flagellatus (strain ATCC 51484 / DSM 6875 / VKM B-1610 / KT).